The sequence spans 310 residues: Tagatose-6-phosphate kinase (310 aa).

It belongs to the carbohydrate kinase PfkB family. LacC subfamily.

The enzyme catalyses D-tagatofuranose 6-phosphate + ATP = D-tagatofuranose 1,6-bisphosphate + ADP + H(+). Its pathway is carbohydrate metabolism; D-tagatose 6-phosphate degradation; D-glyceraldehyde 3-phosphate and glycerone phosphate from D-tagatose 6-phosphate: step 1/2. In Staphylococcus epidermidis (strain ATCC 35984 / DSM 28319 / BCRC 17069 / CCUG 31568 / BM 3577 / RP62A), this protein is Tagatose-6-phosphate kinase.